The chain runs to 335 residues: tRNA N6-adenosine threonylcarbamoyltransferase (335 aa).

Fe cation contacts are provided by H111 and H115. Substrate-binding positions include 133–137, D166, G179, D183, and N268; that span reads IISGG. Residue D296 coordinates Fe cation.

This sequence belongs to the KAE1 / TsaD family. It depends on Fe(2+) as a cofactor.

Its subcellular location is the cytoplasm. It carries out the reaction L-threonylcarbamoyladenylate + adenosine(37) in tRNA = N(6)-L-threonylcarbamoyladenosine(37) in tRNA + AMP + H(+). Required for the formation of a threonylcarbamoyl group on adenosine at position 37 (t(6)A37) in tRNAs that read codons beginning with adenine. Is involved in the transfer of the threonylcarbamoyl moiety of threonylcarbamoyl-AMP (TC-AMP) to the N6 group of A37, together with TsaE and TsaB. TsaD likely plays a direct catalytic role in this reaction. This is tRNA N6-adenosine threonylcarbamoyltransferase from Aquifex aeolicus (strain VF5).